We begin with the raw amino-acid sequence, 241 residues long: Megakaryocyte and platelet inhibitory receptor G6b (241 aa).

A signal peptide spans 1–17 (MAVFLQLLPLLLSRAQG). Residues 18–142 (NPGASLDGRP…GPTHGSVYPQ (125 aa)) are Extracellular-facing. A glycan (N-linked (GlcNAc...) asparagine) is linked at Asn32. The chain crosses the membrane as a helical span at residues 143 to 163 (LLIPLLGAGLVLGLGALGLVW). At 164–241 (WLHRRLPPQP…DASTIYAVVV (78 aa)) the chain is on the cytoplasmic side. 2 consecutive short sequence motifs (ITIM motif) follow at residues 209-214 (LLYADL) and 235-240 (TIYAVV). Residue Tyr211 is modified to Phosphotyrosine.

Interacts (via ITIM motif) with PTPN6 and PTPN11. Binds to heparin. Post-translationally, all isoforms are N-glycosylated. Isoform E is O-glycosylated. In terms of processing, phosphorylated. As to expression, expressed in platelets. Expressed in a restricted set of hematopoietic cell lines including the erythroleukemia cell line K-562 and the T-cell leukemia cell lines MOLT-4 and Jurkat. Not detected in the monocyte-like cell line U-937, the B-cell-like cell line Raji, the fibroblast cell lines TK and HeLa, or the natural killer cell lines NKL, NK 62 and YT.

The protein localises to the endoplasmic reticulum. The protein resides in the golgi apparatus. It localises to the cell membrane. In terms of biological role, inhibitory receptor that acts as a critical regulator of hematopoietic lineage differentiation, megakaryocyte function and platelet production. Inhibits platelet aggregation and activation by agonists such as ADP and collagen-related peptide. This regulation of megakaryocate function as well as platelet production ann activation is done through the inhibition (via the 2 ITIM motifs) of the receptors CLEC1B and GP6:FcRgamma signaling. Appears to operate in a calcium-independent manner. Its function is as follows. Isoform B, displayed in this entry, is the only isoform to contain both a transmembrane region and 2 immunoreceptor tyrosine-based inhibitor motifs (ITIMs) and, thus, the only one which probably has a role of inhibitory receptor. Isoform A may be the activating counterpart of isoform B. This chain is Megakaryocyte and platelet inhibitory receptor G6b, found in Homo sapiens (Human).